Consider the following 157-residue polypeptide: 2-C-methyl-D-erythritol 2,4-cyclodiphosphate synthase (157 aa).

Residues Asp-8 and His-10 each coordinate a divalent metal cation. 4-CDP-2-C-methyl-D-erythritol 2-phosphate is bound by residues 8–10 (DVH) and 34–35 (HS). A divalent metal cation is bound at residue His-42. Residues 56–58 (DIG), 61–65 (FPDTD), 100–106 (AQAPKMA), 132–135 (TTTE), Phe-139, and Arg-142 contribute to the 4-CDP-2-C-methyl-D-erythritol 2-phosphate site.

It belongs to the IspF family. As to quaternary structure, homotrimer. A divalent metal cation is required as a cofactor.

The enzyme catalyses 4-CDP-2-C-methyl-D-erythritol 2-phosphate = 2-C-methyl-D-erythritol 2,4-cyclic diphosphate + CMP. The protein operates within isoprenoid biosynthesis; isopentenyl diphosphate biosynthesis via DXP pathway; isopentenyl diphosphate from 1-deoxy-D-xylulose 5-phosphate: step 4/6. In terms of biological role, involved in the biosynthesis of isopentenyl diphosphate (IPP) and dimethylallyl diphosphate (DMAPP), two major building blocks of isoprenoid compounds. Catalyzes the conversion of 4-diphosphocytidyl-2-C-methyl-D-erythritol 2-phosphate (CDP-ME2P) to 2-C-methyl-D-erythritol 2,4-cyclodiphosphate (ME-CPP) with a corresponding release of cytidine 5-monophosphate (CMP). In Pseudomonas paraeruginosa (strain DSM 24068 / PA7) (Pseudomonas aeruginosa (strain PA7)), this protein is 2-C-methyl-D-erythritol 2,4-cyclodiphosphate synthase.